The following is a 404-amino-acid chain: Lupus La protein homolog (404 aa).

The 93-residue stretch at 7 to 99 (NEKMAALEAK…RRSPSKPLPE (93 aa)) folds into the HTH La-type RNA-binding domain. Ser92 and Ser94 each carry phosphoserine. One can recognise an RRM domain in the interval 111 to 187 (RSVYIKGFPT…TDLLILFKED (77 aa)). Lys116 carries the N6-acetyllysine modification. A Phosphothreonine modification is found at Thr120. Lys128 bears the N6-acetyllysine mark. Ser225 carries the post-translational modification Phosphoserine. In terms of domain architecture, xRRM spans 227–348 (EEKIGCLLKF…KGKGNKAAQA (122 aa)). Residues Lys328 and Lys341 each carry the N6-acetyllysine modification. The span at 329–342 (WKSKGRRFKGKGKG) shows a compositional bias: basic residues. The interval 329 to 404 (WKSKGRRFKG…QKTENGAGDQ (76 aa)) is disordered. Low complexity predominate over residues 343-354 (NKAAQAGSAKGK). An N6-acetyllysine modification is found at Lys360. At Thr362 the chain carries Phosphothreonine. Phosphoserine is present on Ser366. Residues 381–391 (RAREETDKEPP) show a composition bias toward basic and acidic residues.

Interacts with DDX15. May interact with RUFY1. Phosphorylated in the C-terminal part of the protein.

Its subcellular location is the nucleus. In terms of biological role, binds to the 3' poly(U) terminus of nascent RNA polymerase III transcripts, protecting them from exonuclease digestion and facilitating their folding and maturation. The protein is Lupus La protein homolog (SSB) of Bos taurus (Bovine).